A 271-amino-acid chain; its full sequence is Phosphatidylinositol transfer protein beta isoform (271 aa).

Lys-215 bears the N6-acetyllysine mark. Residue Ser-262 is modified to Phosphoserine.

It belongs to the PtdIns transfer protein family. PI transfer class I subfamily. Post-translationally, constitutive phosphorylation of Ser-262 has no effect on phospholipid transfer activity but is required for Golgi targeting. As to expression, widely expressed in various tissues including brain.

The protein resides in the golgi apparatus. It localises to the golgi apparatus membrane. The protein localises to the endoplasmic reticulum membrane. It carries out the reaction a 1,2-diacyl-sn-glycero-3-phosphocholine(in) = a 1,2-diacyl-sn-glycero-3-phosphocholine(out). It catalyses the reaction a 1,2-diacyl-sn-glycero-3-phospho-(1D-myo-inositol)(in) = a 1,2-diacyl-sn-glycero-3-phospho-(1D-myo-inositol)(out). The catalysed reaction is an N-(acyl)-sphingosylphosphocholine(in) = an N-(acyl)-sphingosylphosphocholine(out). Its activity is regulated as follows. Phosphatidylinositol transfer activity is inhibited by N-ethylmaleimide. Functionally, catalyzes the transfer of phosphatidylinositol and phosphatidylcholine between membranes. Also catalyzes the transfer of sphingomyelin. Required for COPI-mediated retrograde transport from the Golgi to the endoplasmic reticulum; phosphatidylinositol and phosphatidylcholine transfer activity is essential for this function. In Homo sapiens (Human), this protein is Phosphatidylinositol transfer protein beta isoform (PITPNB).